We begin with the raw amino-acid sequence, 205 residues long: Holliday junction branch migration complex subunit RuvA (205 aa).

A domain I region spans residues 1–64; sequence MIGRLRGVLV…EDAQLLYGFI (64 aa). The domain II stretch occupies residues 65-143; sequence TKQERALFRL…SLLETSAGSE (79 aa). The interval 144 to 156 is flexible linker; sequence REFMLKSNYTPAP. The interval 157–205 is domain III; sequence VVNTAEEDAIAALLSLGYKPAQASKAVSAAFKEGMSSEDLIKSSLKSML.

This sequence belongs to the RuvA family. In terms of assembly, homotetramer. Forms an RuvA(8)-RuvB(12)-Holliday junction (HJ) complex. HJ DNA is sandwiched between 2 RuvA tetramers; dsDNA enters through RuvA and exits via RuvB. An RuvB hexamer assembles on each DNA strand where it exits the tetramer. Each RuvB hexamer is contacted by two RuvA subunits (via domain III) on 2 adjacent RuvB subunits; this complex drives branch migration. In the full resolvosome a probable DNA-RuvA(4)-RuvB(12)-RuvC(2) complex forms which resolves the HJ.

The protein resides in the cytoplasm. In terms of biological role, the RuvA-RuvB-RuvC complex processes Holliday junction (HJ) DNA during genetic recombination and DNA repair, while the RuvA-RuvB complex plays an important role in the rescue of blocked DNA replication forks via replication fork reversal (RFR). RuvA specifically binds to HJ cruciform DNA, conferring on it an open structure. The RuvB hexamer acts as an ATP-dependent pump, pulling dsDNA into and through the RuvAB complex. HJ branch migration allows RuvC to scan DNA until it finds its consensus sequence, where it cleaves and resolves the cruciform DNA. The polypeptide is Holliday junction branch migration complex subunit RuvA (Shewanella woodyi (strain ATCC 51908 / MS32)).